The primary structure comprises 181 residues: Probable mitochondrial import inner membrane translocase subunit tim-17B.1 (181 aa).

A run of 3 helical transmembrane segments spans residues 17-37 (IGSA…FGGY), 61-81 (GVQF…LVAI), and 109-129 (VMAG…GVGL). The interval 137–181 (AMMDPTQPPPEALDDPRSLGQKSQAEPGLDQTRPFGIPTGLPNLS) is disordered.

The protein belongs to the Tim17/Tim22/Tim23 family.

The protein resides in the mitochondrion inner membrane. Essential component of the TIM23 complex, a complex that mediates the translocation of transit peptide-containing proteins across the mitochondrial inner membrane. The sequence is that of Probable mitochondrial import inner membrane translocase subunit tim-17B.1 from Caenorhabditis elegans.